A 155-amino-acid chain; its full sequence is SsrA-binding protein (155 aa).

It belongs to the SmpB family.

It localises to the cytoplasm. In terms of biological role, required for rescue of stalled ribosomes mediated by trans-translation. Binds to transfer-messenger RNA (tmRNA), required for stable association of tmRNA with ribosomes. tmRNA and SmpB together mimic tRNA shape, replacing the anticodon stem-loop with SmpB. tmRNA is encoded by the ssrA gene; the 2 termini fold to resemble tRNA(Ala) and it encodes a 'tag peptide', a short internal open reading frame. During trans-translation Ala-aminoacylated tmRNA acts like a tRNA, entering the A-site of stalled ribosomes, displacing the stalled mRNA. The ribosome then switches to translate the ORF on the tmRNA; the nascent peptide is terminated with the 'tag peptide' encoded by the tmRNA and targeted for degradation. The ribosome is freed to recommence translation, which seems to be the essential function of trans-translation. The sequence is that of SsrA-binding protein from Streptococcus suis (strain 98HAH33).